We begin with the raw amino-acid sequence, 194 residues long: Protein GrpE (194 aa).

The protein belongs to the GrpE family. In terms of assembly, homodimer.

It localises to the cytoplasm. Participates actively in the response to hyperosmotic and heat shock by preventing the aggregation of stress-denatured proteins, in association with DnaK and GrpE. It is the nucleotide exchange factor for DnaK and may function as a thermosensor. Unfolded proteins bind initially to DnaJ; upon interaction with the DnaJ-bound protein, DnaK hydrolyzes its bound ATP, resulting in the formation of a stable complex. GrpE releases ADP from DnaK; ATP binding to DnaK triggers the release of the substrate protein, thus completing the reaction cycle. Several rounds of ATP-dependent interactions between DnaJ, DnaK and GrpE are required for fully efficient folding. The chain is Protein GrpE from Aliivibrio salmonicida (strain LFI1238) (Vibrio salmonicida (strain LFI1238)).